The sequence spans 174 residues: UPF0340 protein SAR2202 (174 aa).

It belongs to the UPF0340 family.

This is UPF0340 protein SAR2202 from Staphylococcus aureus (strain MRSA252).